Reading from the N-terminus, the 517-residue chain is Aldehyde dehydrogenase X, mitochondrial (517 aa).

Residues 1–17 constitute a mitochondrion transit peptide; it reads MLRFLAPRLLSLQGRTA. Lys-51 is modified (N6-acetyllysine). An N6-acetyllysine; alternate modification is found at Lys-52. Residue Lys-52 is modified to N6-succinyllysine; alternate. An N6-succinyllysine modification is found at Lys-81. 262–267 is a binding site for NAD(+); it reads GSTEVG. The active-site Proton acceptor is the Glu-285. Catalysis depends on Cys-319, which acts as the Nucleophile. N6-acetyllysine; alternate occurs at positions 364, 383, 399, 414, and 426. Lys-364, Lys-383, Lys-399, Lys-414, and Lys-426 each carry N6-succinyllysine; alternate. Lys-429 is modified (N6-acetyllysine).

The protein belongs to the aldehyde dehydrogenase family. As to quaternary structure, homotetramer.

The protein resides in the mitochondrion matrix. It catalyses the reaction an aldehyde + NAD(+) + H2O = a carboxylate + NADH + 2 H(+). The protein operates within alcohol metabolism; ethanol degradation; acetate from ethanol: step 2/2. In terms of biological role, ALDHs play a major role in the detoxification of alcohol-derived acetaldehyde. They are involved in the metabolism of corticosteroids, biogenic amines, neurotransmitters, and lipid peroxidation. The protein is Aldehyde dehydrogenase X, mitochondrial (ALDH1B1) of Pongo abelii (Sumatran orangutan).